We begin with the raw amino-acid sequence, 331 residues long: Probable protein phosphatase 2C 1 (331 aa).

Residues Met1–Arg29 form a disordered region. The PPM-type phosphatase domain maps to Thr48–Val292. Mn(2+) contacts are provided by Asp79, Gly80, Asp210, and Asp283. The disordered stretch occupies residues Asp300–Thr331.

Belongs to the PP2C family. Requires Mg(2+) as cofactor. Mn(2+) serves as cofactor.

The catalysed reaction is O-phospho-L-seryl-[protein] + H2O = L-seryl-[protein] + phosphate. It catalyses the reaction O-phospho-L-threonyl-[protein] + H2O = L-threonyl-[protein] + phosphate. The protein is Probable protein phosphatase 2C 1 of Oryza sativa subsp. japonica (Rice).